We begin with the raw amino-acid sequence, 67 residues long: Large ribosomal subunit protein bL35 (67 aa).

This sequence belongs to the bacterial ribosomal protein bL35 family.

The chain is Large ribosomal subunit protein bL35 from Acidiphilium cryptum (strain JF-5).